The primary structure comprises 210 residues: Uracil phosphoribosyltransferase (210 aa).

5-phospho-alpha-D-ribose 1-diphosphate-binding positions include Arg-78, Arg-103, and 130–138; that span reads DPMLATGGS. Uracil contacts are provided by residues Ile-193 and 198 to 200; that span reads GDA. Asp-199 is a 5-phospho-alpha-D-ribose 1-diphosphate binding site.

The protein belongs to the UPRTase family. It depends on Mg(2+) as a cofactor.

The enzyme catalyses UMP + diphosphate = 5-phospho-alpha-D-ribose 1-diphosphate + uracil. It participates in pyrimidine metabolism; UMP biosynthesis via salvage pathway; UMP from uracil: step 1/1. Allosterically activated by GTP. Its function is as follows. Catalyzes the conversion of uracil and 5-phospho-alpha-D-ribose 1-diphosphate (PRPP) to UMP and diphosphate. This Laribacter hongkongensis (strain HLHK9) protein is Uracil phosphoribosyltransferase.